The primary structure comprises 276 residues: Expansin-A25 (276 aa).

The N-terminal stretch at 1-27 (MKLLEQMVYVECFMIIMATLLVSMSYG) is a signal peptide. Residues 73–183 (QGACGYGDLF…RRISCARTGG (111 aa)) enclose the Expansin-like EG45 domain. One can recognise an Expansin-like CBD domain in the interval 193-272 (YFLMILPYNV…NWGFGQTFDG (80 aa)).

Belongs to the expansin family. Expansin A subfamily.

It is found in the secreted. The protein resides in the cell wall. Its subcellular location is the membrane. In terms of biological role, causes loosening and extension of plant cell walls by disrupting non-covalent bonding between cellulose microfibrils and matrix glucans. No enzymatic activity has been found. The sequence is that of Expansin-A25 (EXPA25) from Arabidopsis thaliana (Mouse-ear cress).